Reading from the N-terminus, the 262-residue chain is Adenosylcobinamide-GDP ribazoletransferase (262 aa).

A run of 6 helical transmembrane segments spans residues 43-63 (YFGL…WLTQ), 66-86 (LPAG…TGGF), 120-140 (GAIA…ELAL), 146-166 (AGSA…SIIF), 191-211 (LFIL…LAAL), and 242-262 (AAQQ…GSIL).

This sequence belongs to the CobS family. The cofactor is Mg(2+).

Its subcellular location is the cell inner membrane. It catalyses the reaction alpha-ribazole + adenosylcob(III)inamide-GDP = adenosylcob(III)alamin + GMP + H(+). The catalysed reaction is alpha-ribazole 5'-phosphate + adenosylcob(III)inamide-GDP = adenosylcob(III)alamin 5'-phosphate + GMP + H(+). The protein operates within cofactor biosynthesis; adenosylcobalamin biosynthesis; adenosylcobalamin from cob(II)yrinate a,c-diamide: step 7/7. Its function is as follows. Joins adenosylcobinamide-GDP and alpha-ribazole to generate adenosylcobalamin (Ado-cobalamin). Also synthesizes adenosylcobalamin 5'-phosphate from adenosylcobinamide-GDP and alpha-ribazole 5'-phosphate. The polypeptide is Adenosylcobinamide-GDP ribazoletransferase (Shewanella putrefaciens (strain CN-32 / ATCC BAA-453)).